The sequence spans 189 residues: Xanthine phosphoribosyltransferase (189 aa).

Leucine 20 and asparagine 27 together coordinate xanthine. 128-132 is a 5-phospho-alpha-D-ribose 1-diphosphate binding site; it reads ANGKA. Lysine 156 serves as a coordination point for xanthine.

It belongs to the purine/pyrimidine phosphoribosyltransferase family. Xpt subfamily. Homodimer.

The protein localises to the cytoplasm. It catalyses the reaction XMP + diphosphate = xanthine + 5-phospho-alpha-D-ribose 1-diphosphate. It participates in purine metabolism; XMP biosynthesis via salvage pathway; XMP from xanthine: step 1/1. Functionally, converts the preformed base xanthine, a product of nucleic acid breakdown, to xanthosine 5'-monophosphate (XMP), so it can be reused for RNA or DNA synthesis. This is Xanthine phosphoribosyltransferase from Pseudomonas savastanoi pv. phaseolicola (strain 1448A / Race 6) (Pseudomonas syringae pv. phaseolicola (strain 1448A / Race 6)).